A 338-amino-acid polypeptide reads, in one-letter code: Solute carrier family 35 member G3 (338 aa).

Positions 1–24 (MAGSHPYFNQPDSTHPSPPSAPPS) are disordered. A run of 9 helical transmembrane segments spans residues 37-57 (TSGLLVALLGGGLPAGFVGPL), 67-87 (LPSLELLIWRCLFHLPIALLL), 105-125 (FFCALLNILSIGCAYSAVQVV), 160-180 (CGLLGCILGLIIIVGPGLWTL), 190-210 (ALGYAEAFLGGRALSLGLLVY), 221-241 (TVAFLSGLVGLLGSVPGLFVL), 250-270 (LLSWSCVGAVGILALVSFTCV), 281-301 (LVCAVLHSEVVVALILQYYML), and 305-325 (VAPSDIMGAGVALGSIAIITA). Residues 49–174 (LPAGFVGPLS…CILGLIIIVG (126 aa)) enclose the EamA 1 domain. The region spanning 272–325 (YAVTKAHPALVCAVLHSEVVVALILQYYMLHETVAPSDIMGAGVALGSIAIITA) is the EamA 2 domain.

Belongs to the SLC35G solute transporter family.

Its subcellular location is the membrane. The protein is Solute carrier family 35 member G3 (SLC35G3) of Pan paniscus (Pygmy chimpanzee).